A 192-amino-acid chain; its full sequence is uncharacterized protein (192 aa).

The 132-residue stretch at 29-160 folds into the Nudix hydrolase domain; the sequence is QRQAAVLIPV…PLDVYRRGNS (132 aa). A Nudix box motif is present at residues 67 to 89; the sequence is GAVDSTDASLIAAALREAQEEVA. Residues glutamate 83 and glutamate 87 each contribute to the Mg(2+) site.

It belongs to the Nudix hydrolase family. PCD1 subfamily. The cofactor is Mn(2+). It depends on Mg(2+) as a cofactor.

Functionally, probably mediates the hydrolysis of some nucleoside diphosphate derivatives. This is an uncharacterized protein from Salmonella agona (strain SL483).